We begin with the raw amino-acid sequence, 356 residues long: Myricetin 7/4'-O-methyltransferase 2 (356 aa).

D222 contacts S-adenosyl-L-methionine. H260 functions as the Proton acceptor in the catalytic mechanism.

The protein belongs to the class I-like SAM-binding methyltransferase superfamily. Cation-independent O-methyltransferase family. In terms of assembly, homodimer.

It catalyses the reaction quercetin + S-adenosyl-L-methionine = rhamnetin + S-adenosyl-L-homocysteine + H(+). The enzyme catalyses kaempferol + S-adenosyl-L-methionine = kaempferide + S-adenosyl-L-homocysteine + H(+). The catalysed reaction is myricetin + S-adenosyl-L-methionine = 7-O-methylmyricetin + S-adenosyl-L-homocysteine + H(+). It carries out the reaction kaempferide + S-adenosyl-L-methionine = 7,4'-O-dimethylkaempferol + S-adenosyl-L-homocysteine + H(+). It catalyses the reaction isorhamnetin + S-adenosyl-L-methionine = 3',4'-O-dimethylquercetin + S-adenosyl-L-homocysteine + 2 H(+). The enzyme catalyses 3',4',5,7-tetrahydroxy-3-methoxyflavone + S-adenosyl-L-methionine = 3',4',5-trihydroxy-3,7-dimethoxyflavone + S-adenosyl-L-homocysteine + H(+). The catalysed reaction is rhamnetin + S-adenosyl-L-methionine = 7,4'-O-dimethylquercetin + S-adenosyl-L-homocysteine + H(+). It carries out the reaction syringetin + S-adenosyl-L-methionine = 7,3',5'-O-trimethylmyricetin + S-adenosyl-L-homocysteine + H(+). It catalyses the reaction 3',4',5'-O-trimethylmyricetin + S-adenosyl-L-methionine = 7,3',4',5'-O-tetramethylmyricetin + S-adenosyl-L-homocysteine. The protein operates within flavonoid metabolism. In terms of biological role, flavonoid 7/4'-O-methyltransferase involved in the biosynthesis of polymethoxylated flavonoids natural products such as myricetin derivatives, aroma compounds possessing antioxidant properties and exhibiting pharmacological activities such as anti-carcinogen, anti-viral, anti-thrombotic, anti-diabetic, anti-atherosclerotic, and anti-inflammatory effects. Catalyzes S-adenosylmethionine-dependent regioselective 7/4'-O-methylation of flavonoids; active on various hydroxylated flavonoid substrates. The chain is Myricetin 7/4'-O-methyltransferase 2 from Solanum lycopersicum (Tomato).